The primary structure comprises 207 residues: Outer-membrane lipoprotein LolB (207 aa).

A signal peptide spans 1 to 21 (MPIRKVSLLRLIPLASLVLAA). The N-palmitoyl cysteine moiety is linked to residue cysteine 22. Cysteine 22 is lipidated: S-diacylglycerol cysteine.

Belongs to the LolB family. Monomer.

It is found in the cell outer membrane. In terms of biological role, plays a critical role in the incorporation of lipoproteins in the outer membrane after they are released by the LolA protein. The protein is Outer-membrane lipoprotein LolB of Serratia proteamaculans (strain 568).